We begin with the raw amino-acid sequence, 132 residues long: Small ribosomal subunit protein uS8 (132 aa).

The protein belongs to the universal ribosomal protein uS8 family. In terms of assembly, part of the 30S ribosomal subunit. Contacts proteins S5 and S12.

Its function is as follows. One of the primary rRNA binding proteins, it binds directly to 16S rRNA central domain where it helps coordinate assembly of the platform of the 30S subunit. The polypeptide is Small ribosomal subunit protein uS8 (Rhizobium etli (strain CIAT 652)).